The chain runs to 471 residues: Plasmepsin VII (471 aa).

An N-terminal signal peptide occupies residues 1 to 24 (MKSVYHHFAIIFFLKLFLCNCILS). The Peptidase A1 domain maps to 96–438 (YYGKIAIGEN…DKDNLQIGFV (343 aa)). Catalysis depends on residues aspartate 115 and aspartate 325.

It belongs to the peptidase A1 family.

It localises to the cytoplasm. The protein is Plasmepsin VII of Plasmodium berghei (strain Anka).